The following is a 465-amino-acid chain: Hexokinase type 1 (465 aa).

Residues 8-447 (EEDFPEVYKV…CGVGAAIMAG (440 aa)) form the Hexokinase domain. Residues 65–197 (TGRERGQFLA…EISVDVMGII (133 aa)) are hexokinase small subdomain. Lys-88 provides a ligand contact to ATP. The interval 139-165 (PLGIAFAFTLKKLALDVGILVSWTKEF) is glucose-binding. The tract at residues 198-436 (NVGAGSLLAL…YNFEFVITQD (239 aa)) is hexokinase large subdomain.

It belongs to the hexokinase family.

It carries out the reaction a D-hexose + ATP = a D-hexose 6-phosphate + ADP + H(+). The enzyme catalyses D-mannose + ATP = D-mannose 6-phosphate + ADP + H(+). The catalysed reaction is D-fructose + ATP = D-fructose 6-phosphate + ADP + H(+). It catalyses the reaction D-glucose + ATP = D-glucose 6-phosphate + ADP + H(+). Its pathway is carbohydrate metabolism; hexose metabolism. It functions in the pathway carbohydrate degradation; glycolysis; D-glyceraldehyde 3-phosphate and glycerone phosphate from D-glucose: step 1/4. In terms of biological role, catalyzes the phosphorylation of various hexoses to hexose 6-phosphate. This is Hexokinase type 1 (Hex-t1) from Drosophila melanogaster (Fruit fly).